The primary structure comprises 494 residues: Ketol-acid reductoisomerase (NADP(+)) (494 aa).

Positions 14–208 (LDQIGRCRFM…GGDRAGVLES (195 aa)) constitute a KARI N-terminal Rossmann domain. Residues 45 to 48 (CGAQ), Arg68, Arg76, Ser78, and 108 to 110 (DKQ) each bind NADP(+). Residue His132 is part of the active site. An NADP(+)-binding site is contributed by Gly158. 2 KARI C-terminal knotted domains span residues 209 to 344 (SFVA…NAPE) and 345 to 487 (YNGK…MTDM). Mg(2+)-binding residues include Asp217, Glu221, Glu389, and Glu393. Ser414 is a substrate binding site.

Belongs to the ketol-acid reductoisomerase family. Mg(2+) is required as a cofactor.

It catalyses the reaction (2R)-2,3-dihydroxy-3-methylbutanoate + NADP(+) = (2S)-2-acetolactate + NADPH + H(+). The enzyme catalyses (2R,3R)-2,3-dihydroxy-3-methylpentanoate + NADP(+) = (S)-2-ethyl-2-hydroxy-3-oxobutanoate + NADPH + H(+). Its pathway is amino-acid biosynthesis; L-isoleucine biosynthesis; L-isoleucine from 2-oxobutanoate: step 2/4. It functions in the pathway amino-acid biosynthesis; L-valine biosynthesis; L-valine from pyruvate: step 2/4. Its function is as follows. Involved in the biosynthesis of branched-chain amino acids (BCAA). Catalyzes an alkyl-migration followed by a ketol-acid reduction of (S)-2-acetolactate (S2AL) to yield (R)-2,3-dihydroxy-isovalerate. In the isomerase reaction, S2AL is rearranged via a Mg-dependent methyl migration to produce 3-hydroxy-3-methyl-2-ketobutyrate (HMKB). In the reductase reaction, this 2-ketoacid undergoes a metal-dependent reduction by NADPH to yield (R)-2,3-dihydroxy-isovalerate. The polypeptide is Ketol-acid reductoisomerase (NADP(+)) (Pseudoalteromonas atlantica (strain T6c / ATCC BAA-1087)).